The primary structure comprises 67 residues: Neurotoxin Os3 (67 aa).

An LCN-type CS-alpha/beta domain is found at 3 to 67 (RDGYIAQPHN…GVIVDGEKCH (65 aa)). Cystine bridges form between C13-C66, C17-C39, C24-C48, and C28-C50.

Belongs to the long (4 C-C) scorpion toxin superfamily. Sodium channel inhibitor family. Alpha subfamily. In terms of tissue distribution, expressed by the venom gland.

Its subcellular location is the secreted. Binds to sodium channels (Nav) and inhibits the inactivation of the activated channels, thereby blocking neuronal transmission. This Orthochirus scrobiculosus (Central Asian scorpion) protein is Neurotoxin Os3.